The following is a 691-amino-acid chain: Ubiquitin-like domain-containing protein CIP73 (691 aa).

A Ubiquitin-like domain is found at 22 to 97 (IEIKIKMLDS…LHLVARHPDL (76 aa)). Disordered stretches follow at residues 92 to 118 (ARHPDLTPPGSLPNHSATEPNSSTGHG), 176 to 203 (TGLGRTSDFTGNPSRPQPEQAGFRISSD), 264 to 283 (RNEERGFVSSRLSSTPEGLS), 432 to 473 (ASTT…ASIA), 499 to 554 (SVNT…SSRV), 590 to 624 (EIHVEDPSSQGTTAGVTSAATSSGAAQAPEAEPNV), and 645 to 691 (HIGR…QKME). Composition is skewed to polar residues over residues 104 to 118 (PNHSATEPNSSTGHG), 178 to 189 (LGRTSDFTGNPS), 273 to 283 (SRLSSTPEGLS), 446 to 465 (TQSASVQRNTGESSVNQTTS), and 499 to 523 (SVNTNNEQGSQPASQQHTAPHSTAE). Over residues 525 to 535 (TLHRQSMEDSA) the composition is skewed to basic and acidic residues. Residues 536 to 554 (RNGTLPTPNTQQEPSSSRV) show a composition bias toward polar residues. A compositionally biased stretch (low complexity) spans 597 to 617 (SSQGTTAGVTSAATSSGAAQA).

As to quaternary structure, interacts with CCAMK. Phosphorylated at the N-terminus by CCAMK. In terms of tissue distribution, highly epressed in roots. Expressed at very low levels in leaves and stems.

The protein resides in the nucleus. In terms of biological role, involved in root nodulation. Required for root nodule organogenesis after infection by symbiotic rhizobia. Probably not involved in arbuscular mycorrhizal (AM) symbiosis. Acts downstream of CCAMK. The chain is Ubiquitin-like domain-containing protein CIP73 from Lotus japonicus (Lotus corniculatus var. japonicus).